The following is a 133-amino-acid chain: Small ribosomal subunit protein bS6 (133 aa).

The span at 106–125 (REERVERAPRAPRPEVKAEP) shows a compositional bias: basic and acidic residues. Residues 106 to 133 (REERVERAPRAPRPEVKAEPEAEATAEA) form a disordered region.

The protein belongs to the bacterial ribosomal protein bS6 family.

Its function is as follows. Binds together with bS18 to 16S ribosomal RNA. This is Small ribosomal subunit protein bS6 from Psychromonas ingrahamii (strain DSM 17664 / CCUG 51855 / 37).